A 346-amino-acid polypeptide reads, in one-letter code: Aspartate-semialdehyde dehydrogenase (346 aa).

Residues 13–16 (TGAV) and 41–42 (RS) each bind NADP(+). Ser98 is subject to Phosphoserine. Arg101 is a phosphate binding site. The active-site Acyl-thioester intermediate is Cys130. Residue Tyr146 is modified to Phosphotyrosine. Gln157 is a substrate binding site. 160–161 (SG) lines the NADP(+) pocket. Residue Lys221 participates in phosphate binding. A substrate-binding site is contributed by Arg243. Residue His250 is the Proton acceptor of the active site. Asn324 contacts NADP(+).

The protein belongs to the aspartate-semialdehyde dehydrogenase family. In terms of assembly, homodimer.

The enzyme catalyses L-aspartate 4-semialdehyde + phosphate + NADP(+) = 4-phospho-L-aspartate + NADPH + H(+). It functions in the pathway amino-acid biosynthesis; L-lysine biosynthesis via DAP pathway; (S)-tetrahydrodipicolinate from L-aspartate: step 2/4. The protein operates within amino-acid biosynthesis; L-methionine biosynthesis via de novo pathway; L-homoserine from L-aspartate: step 2/3. It participates in amino-acid biosynthesis; L-threonine biosynthesis; L-threonine from L-aspartate: step 2/5. In terms of biological role, catalyzes the NADPH-dependent formation of L-aspartate-semialdehyde (L-ASA) by the reductive dephosphorylation of L-aspartyl-4-phosphate. This chain is Aspartate-semialdehyde dehydrogenase, found in Bacillus subtilis (strain 168).